Reading from the N-terminus, the 152-residue chain is Ribonuclease pancreatic gamma-type (152 aa).

A signal peptide spans 1-25 (MGLEKSFILFSLLVLVLGCVQPSLV). Positions 26-48 (GESKESPSEKFKRRHMDEEGPYQ) are disordered. Basic and acidic residues predominate over residues 27–43 (ESKESPSEKFKRRHMDE). Residues K35 and R38 each contribute to the substrate site. Catalysis depends on H40, which acts as the Proton acceptor. 4 disulfide bridges follow: C54–C112, C68–C123, C86–C138, and C93–C100. Residues 69–73 (KPLNT) and K94 contribute to the substrate site. The active-site Proton donor is H147.

The protein belongs to the pancreatic ribonuclease family. As to quaternary structure, monomer.

It localises to the secreted. It carries out the reaction an [RNA] containing cytidine + H2O = an [RNA]-3'-cytidine-3'-phosphate + a 5'-hydroxy-ribonucleotide-3'-[RNA].. The enzyme catalyses an [RNA] containing uridine + H2O = an [RNA]-3'-uridine-3'-phosphate + a 5'-hydroxy-ribonucleotide-3'-[RNA].. In terms of biological role, endonuclease that catalyzes the cleavage of RNA on the 3' side of pyrimidine nucleotides. Acts on single-stranded and double-stranded RNA. This chain is Ribonuclease pancreatic gamma-type, found in Rattus fuscipes (Bush rat).